We begin with the raw amino-acid sequence, 506 residues long: Methylthioalkylmalate synthase 2, chloroplastic (506 aa).

Residues 1-49 constitute a chloroplast transit peptide; sequence MASSLLTSSGMIPTTGSTVVGRSVLPFQSSLHSLRLTHSYKNPALFISC. The region spanning 85 to 359 is the Pyruvate carboxyltransferase domain; it reads VRVFDTTLRD…YTRIDTRQIM (275 aa).

It belongs to the alpha-IPM synthase/homocitrate synthase family.

The protein localises to the plastid. It localises to the chloroplast. The catalysed reaction is an omega-(methylsulfanyl)-2-oxoalkanoate + acetyl-CoA + H2O = a 2-(omega-methylsulfanyl)alkylmalate + CoA + H(+). In terms of biological role, catalyzes only the first methionine chain elongation cycle. The protein is Methylthioalkylmalate synthase 2, chloroplastic (MAM2) of Arabidopsis thaliana (Mouse-ear cress).